A 297-amino-acid chain; its full sequence is GATA transcription factor 24 (297 aa).

In terms of domain architecture, Tify spans 73–108; the sequence is GIENGDQLTLSFQGQVYVFDRVSPEKVQAVLLLLGG. In terms of domain architecture, CCT spans 143 to 185; it reads RLASLLRFREKRKGRNFDKTIRYTVRKEVALRMQRKKGQFTSA. The segment at 178–203 is disordered; sequence KKGQFTSAKSSNDDSGSTGSDWGSNQ. The span at 190–201 shows a compositional bias: low complexity; sequence DDSGSTGSDWGS. The segment at 213-269 adopts a GATA-type zinc-finger fold; that stretch reads QKPEVLCRHCGTSEKSTPMMRRGPDGPRTLCNACGLMWANKGTLRDLSKVPPPQTPQ.

This sequence belongs to the type IV zinc-finger family. Class C subfamily. As to expression, predominantly expressed in shoot apices, inflorescences and roots.

It localises to the nucleus. Functionally, transcriptional activator that specifically binds 5'-GATA-3' or 5'-GAT-3' motifs within gene promoters. In Arabidopsis thaliana (Mouse-ear cress), this protein is GATA transcription factor 24 (GATA24).